A 1186-amino-acid chain; its full sequence is MDCNLQSQQNIPYNVLAIPVSNVNALVDTAGDLKKAWEEFQKTGSFSLTALQQGFSASQGGAFNYLTLLQSGISLAGSFVPGGTFVAPIVNMVIGWLWPHKNKTADTENLIKLIDEEIQKQLNKALLDQDRNNWTSFLESIFDTSATVSNAIIDAQWSGTVDTTNRQQKTPTTSDYLNVVGKFDSADSSIITNENQIMNGNFDVAAAPYFVIGATLRLSLYQSYIKFCNSWIDAVGFSTNDANTQKANLARTKLTMRTTINEYTQRVMKVFKDSKNMPTIGTNKFSVDAYNVYVKGMTLNVLDMVAIWSSLYPNDYTSQTAIEQTRVTFSNMVGQEEGTDGTLKIYNTFDSLSYQHSLIPNNNVNLISYYTDELQNLELAVYTPKGGSGYAYPYGFILNYANSNYKYGDNDPTGKPLNKQDGPIQQINAATQNSKYLDGETINGIGASLPGYCTTGCSATEQPFSCTSTANSYKASCNPSDTNQKINALYAFTQTNVKGSTGKLGVLASLVPYDLNPKNVFGELDSDTNNVILKGIPAEKGYFPNNARPTVVKEWINGASAVPFYSGNTLFMTATNLTATQYKIRIRYANPNSDTQIGVLITQNGSQISNSNLTLYSTTDSSMSSNLPQNVYVTGENGNYTLLDLYSTTNVLSTGDITLKLTGGNQKIFIDRIEFIPTMPVPAPTNNTNNNNGDNGNNNPPHHGCAIAGTQQLCSGPPKFEQVSDLEKITTQVYMLFKSSSYEELALKVSSYQINQVALKVMALSDEKFCEEKRLLRKLVNKANQLLEARNLLVGGNFETTQNWVLGTNAYINYDSFLFNGNYLSLQPASGFFTSYAYQKIDESTLKPYTRYKVSGFIGQSNQVELIISRYGKEIDKILNVPYAGPLPITADASITCCAPEIDQCDGGQSDSHFFNYSIDVGALHPELNPGIEIGLKIVQSNGYITISNLEIIEERPLTEMEIQAVNRKDQKWKREKLLECASVSELLQPIINQIDSLFKDANWYNDILPHVTYQTLKNIIVPDLPKLKHWFIDHLPGEYHEIEQKMKEALKHAFTQLDEKNLIHNGHFATNLIDWQVEGDARMKVLENNALALQLSNWDSSVSQSIDILEFDEDKAYKLRVYAQGSGTIQFGNCEDEAIQFNTNSFVYKEKIIYFDTPSINLHIQSEGSEFVVSSIDLVELSDDE.

This sequence belongs to the delta endotoxin family.

Its function is as follows. Promotes colloidosmotic lysis by binding to the midgut epithelial cells of insects. The chain is Pesticidal crystal protein Cry14Aa (cry14Aa) from Bacillus thuringiensis subsp. sotto.